We begin with the raw amino-acid sequence, 495 residues long: Probable lysine-specific demethylase 4A (495 aa).

The region spanning 18–60 (IMTFRPSYEEFQNFSAYIEYIESRGAHLAGLAKIQPPAEWVPR) is the JmjN domain. Tyrosine 139 provides a ligand contact to 2-oxoglutarate. Residues 149-315 (DEDLDVWNIG…YGKRASICRC (167 aa)) enclose the JmjC domain. Residues histidine 195 and glutamate 197 each coordinate Fe cation. Residues asparagine 205 and lysine 213 each coordinate 2-oxoglutarate. Zn(2+) contacts are provided by cysteine 241 and histidine 247. Lysine 248 contributes to the 2-oxoglutarate binding site. Histidine 283 provides a ligand contact to Fe cation. Residues cysteine 313 and cysteine 315 each contribute to the Zn(2+) site. Serine 409 carries the post-translational modification Phosphoserine.

The protein belongs to the JHDM3 histone demethylase family. The cofactor is Fe(2+).

It is found in the nucleus. The enzyme catalyses N(6),N(6),N(6)-trimethyl-L-lysyl(9)-[histone H3] + 2 2-oxoglutarate + 2 O2 = N(6)-methyl-L-lysyl(9)-[histone H3] + 2 formaldehyde + 2 succinate + 2 CO2. It carries out the reaction N(6),N(6),N(6)-trimethyl-L-lysyl(36)-[histone H3] + 2 2-oxoglutarate + 2 O2 = N(6)-methyl-L-lysyl(36)-[histone H3] + 2 formaldehyde + 2 succinate + 2 CO2. In terms of biological role, probable histone demethylase that specifically demethylates 'Lys-9' and 'Lys-36' residues of histone H3, thereby playing a central role in histone code. Demethylation of Lys residue generates formaldehyde and succinate. This Drosophila melanogaster (Fruit fly) protein is Probable lysine-specific demethylase 4A (Kdm4A).